The chain runs to 332 residues: L-lactate dehydrogenase C chain (332 aa).

NAD(+) is bound by residues G29–K57 and R99. The substrate site is built by R106, N138, and R169. N138 contributes to the NAD(+) binding site. H193 (proton acceptor) is an active-site residue. Position 248 (T248) interacts with substrate. The residue at position 301 (S301) is a Phosphoserine.

It belongs to the LDH/MDH superfamily. LDH family. In terms of assembly, homotetramer. Interacts with RABL2/RABL2A; binds preferentially to GTP-bound RABL2.

It localises to the cytoplasm. The catalysed reaction is (S)-lactate + NAD(+) = pyruvate + NADH + H(+). The protein operates within fermentation; pyruvate fermentation to lactate; (S)-lactate from pyruvate: step 1/1. Functionally, possible role in sperm motility. In Sus scrofa (Pig), this protein is L-lactate dehydrogenase C chain (LDHC).